The chain runs to 184 residues: Probable RNA 2'-phosphotransferase (184 aa).

This sequence belongs to the KptA/TPT1 family.

Functionally, removes the 2'-phosphate from RNA via an intermediate in which the phosphate is ADP-ribosylated by NAD followed by a presumed transesterification to release the RNA and generate ADP-ribose 1''-2''-cyclic phosphate (APPR&gt;P). May function as an ADP-ribosylase. The protein is Probable RNA 2'-phosphotransferase of Escherichia coli O139:H28 (strain E24377A / ETEC).